Here is a 554-residue protein sequence, read N- to C-terminus: Hydroxylamine reductase (554 aa).

Residues cysteine 3, cysteine 6, cysteine 18, and cysteine 25 each contribute to the [2Fe-2S] cluster site. 8 residues coordinate hybrid [4Fe-2O-2S] cluster: histidine 252, glutamate 276, cysteine 320, cysteine 408, cysteine 436, cysteine 461, glutamate 495, and lysine 497. Cysteine 408 is subject to Cysteine persulfide.

This sequence belongs to the HCP family. The cofactor is [2Fe-2S] cluster. Hybrid [4Fe-2O-2S] cluster serves as cofactor.

It is found in the cytoplasm. It carries out the reaction A + NH4(+) + H2O = hydroxylamine + AH2 + H(+). Its function is as follows. Catalyzes the reduction of hydroxylamine to form NH(3) and H(2)O. This chain is Hydroxylamine reductase, found in Shewanella sp. (strain MR-4).